The chain runs to 158 residues: Cytochrome b6-f complex subunit 4 (158 aa).

3 consecutive transmembrane segments (helical) span residues 34–54 (LLYI…GLAV), 93–113 (LLGV…PFLE), and 129–149 (TVFL…TLPI).

Belongs to the cytochrome b family. PetD subfamily. As to quaternary structure, the 4 large subunits of the cytochrome b6-f complex are cytochrome b6, subunit IV (17 kDa polypeptide, petD), cytochrome f and the Rieske protein, while the 4 small subunits are petG, petL, petM and petN. The complex functions as a dimer.

The protein resides in the plastid. It is found in the chloroplast thylakoid membrane. Functionally, component of the cytochrome b6-f complex, which mediates electron transfer between photosystem II (PSII) and photosystem I (PSI), cyclic electron flow around PSI, and state transitions. The sequence is that of Cytochrome b6-f complex subunit 4 from Liriodendron tulipifera (Tuliptree).